Here is a 306-residue protein sequence, read N- to C-terminus: Agmatinase (306 aa).

Residues His126, Asp149, His151, Asp153, Asp230, and Asp232 each coordinate Mn(2+).

Belongs to the arginase family. Agmatinase subfamily. Mn(2+) is required as a cofactor.

The catalysed reaction is agmatine + H2O = urea + putrescine. It participates in amine and polyamine biosynthesis; putrescine biosynthesis via agmatine pathway; putrescine from agmatine: step 1/1. Catalyzes the formation of putrescine from agmatine. This is Agmatinase from Escherichia coli O1:K1 / APEC.